A 130-amino-acid chain; its full sequence is Small ribosomal subunit protein uS8 (130 aa).

Belongs to the universal ribosomal protein uS8 family. Part of the 30S ribosomal subunit. Contacts proteins S5 and S12.

One of the primary rRNA binding proteins, it binds directly to 16S rRNA central domain where it helps coordinate assembly of the platform of the 30S subunit. This chain is Small ribosomal subunit protein uS8, found in Shigella boydii serotype 18 (strain CDC 3083-94 / BS512).